Here is a 424-residue protein sequence, read N- to C-terminus: Serine hydroxymethyltransferase 2 (424 aa).

Residues Leu125 and 129-131 each bind (6S)-5,6,7,8-tetrahydrofolate; that span reads GHL. Lys234 is modified (N6-(pyridoxal phosphate)lysine). Glu250 serves as a coordination point for (6S)-5,6,7,8-tetrahydrofolate.

Belongs to the SHMT family. As to quaternary structure, homodimer. Pyridoxal 5'-phosphate is required as a cofactor.

It localises to the cytoplasm. The enzyme catalyses (6R)-5,10-methylene-5,6,7,8-tetrahydrofolate + glycine + H2O = (6S)-5,6,7,8-tetrahydrofolate + L-serine. The protein operates within one-carbon metabolism; tetrahydrofolate interconversion. It functions in the pathway amino-acid biosynthesis; glycine biosynthesis; glycine from L-serine: step 1/1. Its function is as follows. Catalyzes the reversible interconversion of serine and glycine with tetrahydrofolate (THF) serving as the one-carbon carrier. This reaction serves as the major source of one-carbon groups required for the biosynthesis of purines, thymidylate, methionine, and other important biomolecules. Also exhibits THF-independent aldolase activity toward beta-hydroxyamino acids, producing glycine and aldehydes, via a retro-aldol mechanism. In Burkholderia pseudomallei (strain 1710b), this protein is Serine hydroxymethyltransferase 2.